A 315-amino-acid chain; its full sequence is 4-hydroxy-3-methylbut-2-enyl diphosphate reductase (315 aa).

Position 12 (cysteine 12) interacts with [4Fe-4S] cluster. Residues histidine 41 and histidine 74 each contribute to the (2E)-4-hydroxy-3-methylbut-2-enyl diphosphate site. Dimethylallyl diphosphate-binding residues include histidine 41 and histidine 74. Isopentenyl diphosphate is bound by residues histidine 41 and histidine 74. Cysteine 96 contributes to the [4Fe-4S] cluster binding site. Histidine 124 lines the (2E)-4-hydroxy-3-methylbut-2-enyl diphosphate pocket. A dimethylallyl diphosphate-binding site is contributed by histidine 124. Histidine 124 contacts isopentenyl diphosphate. Residue glutamate 126 is the Proton donor of the active site. Position 168 (threonine 168) interacts with (2E)-4-hydroxy-3-methylbut-2-enyl diphosphate. Residue cysteine 198 coordinates [4Fe-4S] cluster. (2E)-4-hydroxy-3-methylbut-2-enyl diphosphate is bound by residues serine 226, serine 227, asparagine 228, and serine 270. Dimethylallyl diphosphate is bound by residues serine 226, serine 227, asparagine 228, and serine 270. Positions 226, 227, 228, and 270 each coordinate isopentenyl diphosphate.

Belongs to the IspH family. Requires [4Fe-4S] cluster as cofactor.

The enzyme catalyses isopentenyl diphosphate + 2 oxidized [2Fe-2S]-[ferredoxin] + H2O = (2E)-4-hydroxy-3-methylbut-2-enyl diphosphate + 2 reduced [2Fe-2S]-[ferredoxin] + 2 H(+). It carries out the reaction dimethylallyl diphosphate + 2 oxidized [2Fe-2S]-[ferredoxin] + H2O = (2E)-4-hydroxy-3-methylbut-2-enyl diphosphate + 2 reduced [2Fe-2S]-[ferredoxin] + 2 H(+). It participates in isoprenoid biosynthesis; dimethylallyl diphosphate biosynthesis; dimethylallyl diphosphate from (2E)-4-hydroxy-3-methylbutenyl diphosphate: step 1/1. It functions in the pathway isoprenoid biosynthesis; isopentenyl diphosphate biosynthesis via DXP pathway; isopentenyl diphosphate from 1-deoxy-D-xylulose 5-phosphate: step 6/6. Functionally, catalyzes the conversion of 1-hydroxy-2-methyl-2-(E)-butenyl 4-diphosphate (HMBPP) into a mixture of isopentenyl diphosphate (IPP) and dimethylallyl diphosphate (DMAPP). Acts in the terminal step of the DOXP/MEP pathway for isoprenoid precursor biosynthesis. This is 4-hydroxy-3-methylbut-2-enyl diphosphate reductase from Pseudomonas fluorescens (strain ATCC BAA-477 / NRRL B-23932 / Pf-5).